The following is a 206-amino-acid chain: Imidazoleglycerol-phosphate dehydratase (206 aa).

The protein belongs to the imidazoleglycerol-phosphate dehydratase family.

The protein resides in the cytoplasm. The catalysed reaction is D-erythro-1-(imidazol-4-yl)glycerol 3-phosphate = 3-(imidazol-4-yl)-2-oxopropyl phosphate + H2O. It participates in amino-acid biosynthesis; L-histidine biosynthesis; L-histidine from 5-phospho-alpha-D-ribose 1-diphosphate: step 6/9. This is Imidazoleglycerol-phosphate dehydratase from Leptospira borgpetersenii serovar Hardjo-bovis (strain JB197).